The following is a 428-amino-acid chain: tRNA modification GTPase MnmE (428 aa).

Arginine 20, glutamate 76, and arginine 116 together coordinate (6S)-5-formyl-5,6,7,8-tetrahydrofolate. Residues 212–351 (GFEVAIIGAP…LVEALQDRLL (140 aa)) enclose the TrmE-type G domain. Asparagine 222 contributes to the K(+) binding site. GTP-binding positions include 222–227 (NAGKST), 241–247 (SEVAGTT), and 266–269 (DTAG). Serine 226 is a binding site for Mg(2+). K(+)-binding residues include serine 241, valine 243, and threonine 246. Threonine 247 lines the Mg(2+) pocket. Residue lysine 428 participates in (6S)-5-formyl-5,6,7,8-tetrahydrofolate binding.

The protein belongs to the TRAFAC class TrmE-Era-EngA-EngB-Septin-like GTPase superfamily. TrmE GTPase family. As to quaternary structure, homodimer. Heterotetramer of two MnmE and two MnmG subunits. Requires K(+) as cofactor.

Its subcellular location is the cytoplasm. Exhibits a very high intrinsic GTPase hydrolysis rate. Involved in the addition of a carboxymethylaminomethyl (cmnm) group at the wobble position (U34) of certain tRNAs, forming tRNA-cmnm(5)s(2)U34. The polypeptide is tRNA modification GTPase MnmE (Cereibacter sphaeroides (strain ATCC 17025 / ATH 2.4.3) (Rhodobacter sphaeroides)).